The sequence spans 129 residues: Copper chaperone GriE (129 aa).

Residues 1 to 37 (MPMNRREMVMATTGAALAAAAAVPLLSGGEGEGAAEA) constitute a signal peptide (tat-type signal). A disordered region spans residues 32–51 (EGAAEAAAAPAKATGRGREH). Over residues 34–45 (AAEAAAAPAKAT) the composition is skewed to low complexity.

The protein belongs to the melC1 family. In terms of processing, predicted to be exported by the Tat system. The position of the signal peptide cleavage has not been experimentally proven.

In terms of biological role, involved in the transfer of Cu(2+) ions to the apo form of o-aminophenol oxidase GriF in the grixazone biosynthetic pathway. This Streptomyces griseus subsp. griseus (strain JCM 4626 / CBS 651.72 / NBRC 13350 / KCC S-0626 / ISP 5235) protein is Copper chaperone GriE (griE).